The following is a 386-amino-acid chain: 26S proteasome non-ATPase regulatory subunit 13 homolog A (386 aa).

Ala2 carries the N-acetylalanine modification. The PCI domain occupies 173 to 347; it reads EFSDFYKSAL…GTIYVSWAQP (175 aa).

It belongs to the proteasome subunit S11 family. Component of the 19S regulatory particle (RP/PA700) lid subcomplex of the 26S proteasome. The 26S proteasome is composed of a core protease (CP), known as the 20S proteasome, capped at one or both ends by the 19S regulatory particle (RP/PA700). The RP/PA700 complex is composed of at least 17 different subunits in two subcomplexes, the base and the lid, which form the portions proximal and distal to the 20S proteolytic core, respectively. In terms of tissue distribution, ubiquitous with highest expression in flowers.

In terms of biological role, acts as a regulatory subunit of the 26S proteasome which is involved in the ATP-dependent degradation of ubiquitinated proteins. This is 26S proteasome non-ATPase regulatory subunit 13 homolog A (RPN9A) from Arabidopsis thaliana (Mouse-ear cress).